The primary structure comprises 610 residues: 6(G)-fructosyltransferase (610 aa).

Residues 1-20 lie on the Cytoplasmic side of the membrane; that stretch reads MATSLQAPILGSRPPRRTLR. A helical; Signal-anchor for type II membrane protein transmembrane segment spans residues 21–38; sequence FLSFALFSALVLVVASFS. Residues 39–610 lie on the Vacuolar side of the membrane; it reads SRKSESGSGL…NQYYPFTSSN (572 aa). Residues 79–82, Q98, W106, 141–142, and 207–208 each bind substrate; these read YMND, WT, and RD. Residue D82 is part of the active site. N-linked (GlcNAc...) asparagine glycans are attached at residues N215, N229, and N248. E266 contacts substrate. Residue N459 is glycosylated (N-linked (GlcNAc...) asparagine). The cysteines at positions 460 and 508 are disulfide-linked. N-linked (GlcNAc...) asparagine glycans are attached at residues N580 and N597.

Belongs to the glycosyl hydrolase 32 family. Post-translationally, might be processed in two N-terminal and C-terminal proteolytic fragments.

It is found in the vacuole membrane. It catalyses the reaction [1-beta-D-fructofuranosyl-(2-&gt;1)-]m+1 alpha-D-glucopyranoside + [1-beta-D-fructofuranosyl-(2-&gt;1)-]n+1 alpha-D-glucopyranoside = [1-beta-D-fructofuranosyl-(2-&gt;1)-]m alpha-D-glucopyranoside + [1-beta-D-fructofuranosyl-(2-&gt;1)-]n+1 beta-D-fructofuranosyl-(2-&gt;6)-alpha-D-glucopyranoside (m &gt; 0, n &gt;= 0).. Functionally, involved in the synthesis of fructan of the inulin neoseries. Has no 1-FFT activity. In Asparagus officinalis (Garden asparagus), this protein is 6(G)-fructosyltransferase (FT1).